The following is a 418-amino-acid chain: Tyrosine--tRNA ligase 1 (418 aa).

Tyrosine 34 provides a ligand contact to L-tyrosine. The 'HIGH' region motif lies at 39–48; the sequence is PTADSLHIGH. 2 residues coordinate L-tyrosine: tyrosine 169 and glutamine 173. A 'KMSKS' region motif is present at residues 230–234; sequence KFGKT. Lysine 233 contributes to the ATP binding site. Positions 352-418 constitute an S4 RNA-binding domain; that stretch reads TVLIDLLVES…GKKKYFLIRY (67 aa).

This sequence belongs to the class-I aminoacyl-tRNA synthetase family. TyrS type 1 subfamily. Homodimer.

It localises to the cytoplasm. The catalysed reaction is tRNA(Tyr) + L-tyrosine + ATP = L-tyrosyl-tRNA(Tyr) + AMP + diphosphate + H(+). Its function is as follows. Catalyzes the attachment of tyrosine to tRNA(Tyr) in a two-step reaction: tyrosine is first activated by ATP to form Tyr-AMP and then transferred to the acceptor end of tRNA(Tyr). The protein is Tyrosine--tRNA ligase 1 of Bacillus cereus (strain ATCC 10987 / NRS 248).